The primary structure comprises 162 residues: Small ribosomal subunit protein uS9 (162 aa).

The protein belongs to the universal ribosomal protein uS9 family.

The protein is Small ribosomal subunit protein uS9 of Parvibaculum lavamentivorans (strain DS-1 / DSM 13023 / NCIMB 13966).